We begin with the raw amino-acid sequence, 334 residues long: Probable fructose-bisphosphate aldolase class 1 (334 aa).

It belongs to the class I fructose-bisphosphate aldolase family.

The enzyme catalyses beta-D-fructose 1,6-bisphosphate = D-glyceraldehyde 3-phosphate + dihydroxyacetone phosphate. It participates in carbohydrate degradation; glycolysis; D-glyceraldehyde 3-phosphate and glycerone phosphate from D-glucose: step 4/4. This is Probable fructose-bisphosphate aldolase class 1 from Xanthomonas campestris pv. campestris (strain ATCC 33913 / DSM 3586 / NCPPB 528 / LMG 568 / P 25).